The chain runs to 530 residues: GMP synthase [glutamine-hydrolyzing] (530 aa).

Residues 4–205 (RILILDYGSQ…VKDICGCEGD (202 aa)) enclose the Glutamine amidotransferase type-1 domain. The active-site Nucleophile is cysteine 84. Catalysis depends on residues histidine 179 and glutamate 181. A GMPS ATP-PPase domain is found at 206–398 (WNMPDYISEA…LGLPPQMVYR (193 aa)). 233–239 (SGGVDSL) serves as a coordination point for ATP.

Homodimer.

The enzyme catalyses XMP + L-glutamine + ATP + H2O = GMP + L-glutamate + AMP + diphosphate + 2 H(+). The protein operates within purine metabolism; GMP biosynthesis; GMP from XMP (L-Gln route): step 1/1. Catalyzes the synthesis of GMP from XMP. This is GMP synthase [glutamine-hydrolyzing] from Bordetella parapertussis (strain 12822 / ATCC BAA-587 / NCTC 13253).